Reading from the N-terminus, the 301-residue chain is Ribosomal RNA small subunit methyltransferase H (301 aa).

S-adenosyl-L-methionine-binding positions include 35–37 (GGH), Asp55, Phe84, Asp105, and Gln112.

This sequence belongs to the methyltransferase superfamily. RsmH family.

Its subcellular location is the cytoplasm. The catalysed reaction is cytidine(1402) in 16S rRNA + S-adenosyl-L-methionine = N(4)-methylcytidine(1402) in 16S rRNA + S-adenosyl-L-homocysteine + H(+). In terms of biological role, specifically methylates the N4 position of cytidine in position 1402 (C1402) of 16S rRNA. This is Ribosomal RNA small subunit methyltransferase H from Chloroflexus aurantiacus (strain ATCC 29366 / DSM 635 / J-10-fl).